Reading from the N-terminus, the 539-residue chain is Hydroxylamine reductase (539 aa).

[4Fe-4S] cluster-binding residues include Cys-3, Cys-6, Cys-14, and Cys-20. Positions 232, 256, 300, 392, 420, 445, 480, and 482 each coordinate hybrid [4Fe-2O-2S] cluster. At Cys-392 the chain carries Cysteine persulfide.

Belongs to the HCP family. Requires [4Fe-4S] cluster as cofactor. The cofactor is hybrid [4Fe-2O-2S] cluster.

Its subcellular location is the cytoplasm. The catalysed reaction is A + NH4(+) + H2O = hydroxylamine + AH2 + H(+). Functionally, catalyzes the reduction of hydroxylamine to form NH(3) and H(2)O. The protein is Hydroxylamine reductase of Chlorobaculum tepidum (strain ATCC 49652 / DSM 12025 / NBRC 103806 / TLS) (Chlorobium tepidum).